The chain runs to 824 residues: MRLSKVSDIKSTGVSNYKNFNSKNSSKYSLMEVSKKNEKKNSLGAFHSKKILLIFGIIYVVLLNAYICGDKYEKAVDYGFRESRILAEGEDTCARKEKTTLRKSKQKTSTRTVATQTKKDEENKSVVTEEQKVESDSEKQKRTKKVVKKQINIGDTENQKEGKNVKKVIKKEKKKEESGKPEENKHANEASKKQEPKASKVSQKPSTSTRSNNEVKIRAASNQETLTSADPEGQIMREYAADPEYRKHLEIFYKILTNTDPNDEVERRNADNKEDLTSADPEGQIMREYASDPEYRKHLEIFYKILTNTDPNDDVERRNADNKEDLTSADPEGQIMREYAADPEYRKHLEVFHKILTNTDPNDEVERRNADNKEDLTSADPEGQIMREYAADPEYRKHLEVFHKILTNTDPNDEVERRNADNKELTSSDPEGQIMREYAADPEYRKHLEVFHKILTNTDPNDEVERRNADNKEDLTSADPEGQIMREYAADPEYRKHLEVFHKILTNTDPNDEVERRNADNKEDLTSADPEGQIMREYAADPEYRKHLEIFHKILTNTDPNDEVERRNADNKEDLTSADPEGQIMREYAADPEYRKHLEIFYKILTNTDPNDEVERRNADNKEELTSSDPEGQIMREYAADPEYRKHLEIFHKILTNTDPNDEVERRNADNKEDLTSADPEGQIMREYAADPEYRKHLEIFYKILTNTDPNDEVERRNADNKEDLTSADPEGQIMREYASDPEYRKHLEIFYKILTNTDPNDDVERRNADNKEDLTSADPEGQIMREYAADPEYRKHLEVFHKILTNTDPNDEVERQNADNNEA.

The PEXEL motif signature appears at 84-88; that stretch reads RILAE. Disordered regions lie at residues 97–236, 258–291, 310–334, 358–384, 408–431, 457–482, 507–532, 559–582, 659–683, 711–733, and 759–783; these read EKTT…GQIM, NTDP…EYAS, DPND…PEGQ, NTDP…PEGQ, NTDP…SDPE, NTDP…DPEG, DPND…DPEG, and NDEV…PEGQ. 2 stretches are compositionally biased toward basic and acidic residues: residues 117–140 and 174–198; these read TKKD…SEKQ and KKEE…EPKA. A compositionally biased stretch (polar residues) spans 200-228; that stretch reads KVSQKPSTSTRSNNEVKIRAASNQETLTS. GBP repeat units lie at residues 226-275, 276-325, 326-375, 376-424, 425-474, 475-524, 525-574, 575-624, 625-674, 675-724, 725-774, and 775-824; these read LTSA…NKED, LTSA…DNKE, LTSS…NKED, LTSA…NKEE, and LTSA…NNEA. Composition is skewed to basic and acidic residues over residues 264 to 276, 314 to 326, 364 to 376, 414 to 426, 463 to 475, 513 to 525, 563 to 575, 663 to 675, 713 to 725, and 763 to 775; these read EVER…KEDL, DVER…KEDL, and EVER…KELT.

In terms of assembly, interacts with host glycophorin.

The protein localises to the secreted. The protein resides in the cell surface. It localises to the host cytoplasm. In terms of biological role, involved in merozoite invasion of host erythrocytes. The chain is Glycophorin-binding protein 130 from Plasmodium falciparum (isolate 3D7).